The primary structure comprises 478 residues: Methionine aminopeptidase 2-1 (478 aa).

The segment at 1-124 (MGSKSPEGHN…PRVPLSTLFP (124 aa)) is disordered. Acidic residues predominate over residues 46–56 (NDDDDADDDEK). Basic residues predominate over residues 92 to 104 (KKKKKRKRSKKKA). H230 lines the substrate pocket. A divalent metal cation contacts are provided by D251, D262, and H331. H339 contributes to the substrate binding site. E364 and E459 together coordinate a divalent metal cation.

It belongs to the peptidase M24A family. Methionine aminopeptidase eukaryotic type 2 subfamily. Co(2+) serves as cofactor. Zn(2+) is required as a cofactor. Requires Mn(2+) as cofactor. The cofactor is Fe(2+).

It is found in the cytoplasm. The enzyme catalyses Release of N-terminal amino acids, preferentially methionine, from peptides and arylamides.. In terms of biological role, cotranslationally removes the N-terminal methionine from nascent proteins. The N-terminal methionine is often cleaved when the second residue in the primary sequence is small and uncharged (Met-Ala-, Cys, Gly, Pro, Ser, Thr, or Val). The chain is Methionine aminopeptidase 2-1 from Aspergillus clavatus (strain ATCC 1007 / CBS 513.65 / DSM 816 / NCTC 3887 / NRRL 1 / QM 1276 / 107).